The chain runs to 235 residues: Type III pantothenate kinase (235 aa).

Asp6–Lys13 is a binding site for ATP. Substrate is bound by residues Tyr81 and Gly88–Arg91. Catalysis depends on Asp90, which acts as the Proton acceptor. Asp111 contributes to the K(+) binding site. Thr114 is an ATP binding site. Thr166 is a substrate binding site.

This sequence belongs to the type III pantothenate kinase family. In terms of assembly, homodimer. Requires NH4(+) as cofactor. K(+) serves as cofactor.

Its subcellular location is the cytoplasm. The catalysed reaction is (R)-pantothenate + ATP = (R)-4'-phosphopantothenate + ADP + H(+). It participates in cofactor biosynthesis; coenzyme A biosynthesis; CoA from (R)-pantothenate: step 1/5. Catalyzes the phosphorylation of pantothenate (Pan), the first step in CoA biosynthesis. This Cytophaga hutchinsonii (strain ATCC 33406 / DSM 1761 / CIP 103989 / NBRC 15051 / NCIMB 9469 / D465) protein is Type III pantothenate kinase.